The following is a 576-amino-acid chain: Lysine--tRNA ligase, mitochondrial (576 aa).

Residues 1–30 constitute a mitochondrion transit peptide; that stretch reads MNVLLKRRSLTFAPRWLWCKCRSSRSRPYS.

This sequence belongs to the class-II aminoacyl-tRNA synthetase family.

Its subcellular location is the mitochondrion matrix. The catalysed reaction is tRNA(Lys) + L-lysine + ATP = L-lysyl-tRNA(Lys) + AMP + diphosphate. Functionally, catalyzes the attachment of lysine to tRNA(Lys) in the mitochondrion. The chain is Lysine--tRNA ligase, mitochondrial (MSK1) from Saccharomyces cerevisiae (strain ATCC 204508 / S288c) (Baker's yeast).